Reading from the N-terminus, the 156-residue chain is Transcription antitermination protein NusB (156 aa).

This sequence belongs to the NusB family.

In terms of biological role, involved in transcription antitermination. Required for transcription of ribosomal RNA (rRNA) genes. Binds specifically to the boxA antiterminator sequence of the ribosomal RNA (rrn) operons. In Mycobacterium tuberculosis (strain CDC 1551 / Oshkosh), this protein is Transcription antitermination protein NusB.